We begin with the raw amino-acid sequence, 510 residues long: NAD(P)H-quinone oxidoreductase subunit 2 B, chloroplastic (510 aa).

13 helical membrane-spanning segments follow: residues 24-44 (LLFFDGSLIFPECILIFGLIL), 57-77 (IPWLYFISSTSLVMSITALLF), 99-119 (IFQFLILLCSTLCIPLSVEYI), 124-144 (MAITEFLLFVLTATIGGMFLC), 149-169 (LITIFVAPECFSLCSYLLSGY), 183-203 (YLLMGGASSSILVHGFSWLYG), 227-247 (PGISIALIFITVGIGFKLSPA), 295-315 (WHLLLEILAILSMILGNLIAI), 323-343 (MLAYSSIGQIGYVIIGIIVGD), 354-374 (YMLFYISMNLGTFACIVLFGL), 395-415 (ALSLALCLLSLGGLPPLAGFF), 418-438 (LYLFWCGWQAGLYFLVLIGLL), and 484-504 (MIVCVIASTIPGISMNPIIAI).

This sequence belongs to the complex I subunit 2 family. As to quaternary structure, NDH is composed of at least 16 different subunits, 5 of which are encoded in the nucleus.

It is found in the plastid. Its subcellular location is the chloroplast thylakoid membrane. It catalyses the reaction a plastoquinone + NADH + (n+1) H(+)(in) = a plastoquinol + NAD(+) + n H(+)(out). The catalysed reaction is a plastoquinone + NADPH + (n+1) H(+)(in) = a plastoquinol + NADP(+) + n H(+)(out). In terms of biological role, NDH shuttles electrons from NAD(P)H:plastoquinone, via FMN and iron-sulfur (Fe-S) centers, to quinones in the photosynthetic chain and possibly in a chloroplast respiratory chain. The immediate electron acceptor for the enzyme in this species is believed to be plastoquinone. Couples the redox reaction to proton translocation, and thus conserves the redox energy in a proton gradient. The chain is NAD(P)H-quinone oxidoreductase subunit 2 B, chloroplastic from Guizotia abyssinica (Niger).